A 255-amino-acid chain; its full sequence is Flap endonuclease Xni (255 aa).

Asp-105 contributes to the Mg(2+) binding site. Residues 163–253 (QYQMLDFIAL…NLKQFRINPI (91 aa)) enclose the 5'-3' exonuclease domain. Positions 172, 173, 181, 183, and 186 each coordinate K(+). An interaction with DNA region spans residues 185 to 190 (GIGPKS).

The protein belongs to the Xni family. The cofactor is Mg(2+). K(+) is required as a cofactor.

Functionally, has flap endonuclease activity. During DNA replication, flap endonucleases cleave the 5'-overhanging flap structure that is generated by displacement synthesis when DNA polymerase encounters the 5'-end of a downstream Okazaki fragment. This chain is Flap endonuclease Xni, found in Shewanella frigidimarina (strain NCIMB 400).